The following is a 128-amino-acid chain: uncharacterized protein (128 aa).

Residues 6-74 (GSKLQGKITG…KDGKIGLSIK (69 aa)) form the S1 motif domain. The disordered stretch occupies residues 72-128 (SIKKAKDRPQARPRNDFRPKESFEQKMNKFLKDSEDRLSSLKRNTESKRGGRGARRG). A compositionally biased stretch (basic and acidic residues) spans 78–120 (DRPQARPRNDFRPKESFEQKMNKFLKDSEDRLSSLKRNTESKR).

The protein belongs to the peptidase U57 family.

This is an uncharacterized protein from Bacillus subtilis (strain 168).